A 165-amino-acid chain; its full sequence is Small ribosomal subunit protein uS5 (165 aa).

The S5 DRBM domain occupies 10-73; the sequence is LKEKVVSISR…EDAKKNLVEV (64 aa).

This sequence belongs to the universal ribosomal protein uS5 family. Part of the 30S ribosomal subunit. Contacts proteins S4 and S8.

Functionally, with S4 and S12 plays an important role in translational accuracy. Its function is as follows. Located at the back of the 30S subunit body where it stabilizes the conformation of the head with respect to the body. The sequence is that of Small ribosomal subunit protein uS5 from Clostridium perfringens (strain ATCC 13124 / DSM 756 / JCM 1290 / NCIMB 6125 / NCTC 8237 / Type A).